We begin with the raw amino-acid sequence, 376 residues long: Putative F-box/FBD/LRR-repeat protein At5g52460 (376 aa).

Residues 16–75 (RDEISSLPDDLLIQILLLVPIKDAVGTMILSKRWRYVWTLLPKLEYSDPGDECESVWKFL) form the F-box domain. LRR repeat units lie at residues 131–154 (CKTL…VCLP) and 199–224 (FAKV…KFLK). One can recognise an FBD domain in the interval 296 to 348 (CHGTNQGTVPRCLSAHLDEEFVWHGYRGNEEETQLIRYIFANAKCLKKREIST).

The protein is Putative F-box/FBD/LRR-repeat protein At5g52460 (EDA41) of Arabidopsis thaliana (Mouse-ear cress).